The following is a 400-amino-acid chain: Acetylornithine aminotransferase (400 aa).

Pyridoxal 5'-phosphate-binding positions include 102-103 (GA) and F135. Position 138 (R138) interacts with N(2)-acetyl-L-ornithine. 220 to 223 (DEVQ) lines the pyridoxal 5'-phosphate pocket. At K249 the chain carries N6-(pyridoxal phosphate)lysine. A N(2)-acetyl-L-ornithine-binding site is contributed by S276. T277 serves as a coordination point for pyridoxal 5'-phosphate.

Belongs to the class-III pyridoxal-phosphate-dependent aminotransferase family. ArgD subfamily. As to quaternary structure, homodimer. The cofactor is pyridoxal 5'-phosphate.

The protein resides in the cytoplasm. It catalyses the reaction N(2)-acetyl-L-ornithine + 2-oxoglutarate = N-acetyl-L-glutamate 5-semialdehyde + L-glutamate. The protein operates within amino-acid biosynthesis; L-arginine biosynthesis; N(2)-acetyl-L-ornithine from L-glutamate: step 4/4. In Gloeobacter violaceus (strain ATCC 29082 / PCC 7421), this protein is Acetylornithine aminotransferase.